The primary structure comprises 301 residues: Oxygen-dependent coproporphyrinogen-III oxidase (301 aa).

Ser90 serves as a coordination point for substrate. Residues His94 and His104 each coordinate a divalent metal cation. Catalysis depends on His104, which acts as the Proton donor. 106 to 108 (NVR) is a binding site for substrate. Residues His143 and His173 each contribute to the a divalent metal cation site. Residues 238–273 (YVEFNLVWDRGTLFGLQSGGRTESILMSLPPIVKWR) form an important for dimerization region. 256–258 (GGR) lines the substrate pocket.

The protein belongs to the aerobic coproporphyrinogen-III oxidase family. Homodimer. The cofactor is a divalent metal cation.

It is found in the cytoplasm. The enzyme catalyses coproporphyrinogen III + O2 + 2 H(+) = protoporphyrinogen IX + 2 CO2 + 2 H2O. Its pathway is porphyrin-containing compound metabolism; protoporphyrin-IX biosynthesis; protoporphyrinogen-IX from coproporphyrinogen-III (O2 route): step 1/1. Functionally, involved in the heme biosynthesis. Catalyzes the aerobic oxidative decarboxylation of propionate groups of rings A and B of coproporphyrinogen-III to yield the vinyl groups in protoporphyrinogen-IX. This Nitrosomonas eutropha (strain DSM 101675 / C91 / Nm57) protein is Oxygen-dependent coproporphyrinogen-III oxidase.